The primary structure comprises 320 residues: Nuclease (320 aa).

His155 (proton acceptor) is an active-site residue. Asn187 is a Mg(2+) binding site. Asn204 carries N-linked (GlcNAc...) asparagine glycosylation. Cys312 and Cys317 are oxidised to a cystine.

Belongs to the DNA/RNA non-specific endonuclease family. As to quaternary structure, homodimer; as a result of non-covalent interactions and not through the disulfide linkages between the two monomers. Mg(2+) serves as cofactor. Requires Mn(2+) as cofactor. Post-translationally, glycosylated.

It is found in the secreted. In terms of biological role, this enzyme has both RNase and DNase activity. This Syncephalastrum racemosum (Filamentous fungus) protein is Nuclease.